The following is a 338-amino-acid chain: 1-aminocyclopropane-1-carboxylate deaminase (338 aa).

Lys-51 carries the N6-(pyridoxal phosphate)lysine modification. Catalysis depends on Ser-78, which acts as the Nucleophile.

The protein belongs to the ACC deaminase/D-cysteine desulfhydrase family. Homotrimer. Pyridoxal 5'-phosphate serves as cofactor.

It carries out the reaction 1-aminocyclopropane-1-carboxylate + H2O = 2-oxobutanoate + NH4(+). In terms of biological role, catalyzes a cyclopropane ring-opening reaction, the irreversible conversion of 1-aminocyclopropane-1-carboxylate (ACC) to ammonia and alpha-ketobutyrate. Allows growth on ACC as a nitrogen source. The sequence is that of 1-aminocyclopropane-1-carboxylate deaminase from Paraburkholderia xenovorans (strain LB400).